The chain runs to 380 residues: Putative heat stress transcription factor B-4a (380 aa).

Residues Leu216–Val245 are hydrophobic repeat HR-A/B. 2 disordered regions span residues Pro268–Glu296 and Ile314–Pro380. Positions Val278–Glu296 are enriched in low complexity. The Nuclear localization signal motif lies at Arg346 to Arg348.

It belongs to the HSF family. Class B subfamily. Homotrimer. In terms of processing, exhibits temperature-dependent phosphorylation.

The protein localises to the nucleus. Transcriptional regulator that specifically binds DNA of heat shock promoter elements (HSE). The protein is Putative heat stress transcription factor B-4a (HSFB4A) of Oryza sativa subsp. japonica (Rice).